The primary structure comprises 397 residues: Nuclear RNA export factor 5 (397 aa).

An RRM domain is found at 13–92; it reads WFKVTIPYGI…IFVSHFTAPY (80 aa). LRR repeat units follow at residues 160–185, 186–209, 210–237, and 238–265; these read ELLS…EKAP, KVKT…VKGL, KLEE…AIRD, and CFPK…ETMK. In terms of domain architecture, NTF2; truncated spans 280–367; that stretch reads LVLQFLQQSN…ESQRWWCLLS (88 aa).

Belongs to the NXF family. As to quaternary structure, interacts with NXT1 and NXT2.

The protein localises to the cytoplasm. It is found in the nucleus. In terms of biological role, could be involved in the export of mRNA from the nucleus to the cytoplasm. Could also have a role in polarized cytoplasmic transport and localization of mRNA in neurons. This Homo sapiens (Human) protein is Nuclear RNA export factor 5 (NXF5).